Reading from the N-terminus, the 214-residue chain is Probable adenylyl-sulfate kinase (214 aa).

13–20 (GLSGAGKT) is a binding site for ATP. Residue serine 87 is the Phosphoserine intermediate of the active site. The tract at residues 174–199 (WNRTNTFPLKSRPNPPHRHKSKSSRA) is disordered.

The protein belongs to the APS kinase family.

It catalyses the reaction adenosine 5'-phosphosulfate + ATP = 3'-phosphoadenylyl sulfate + ADP + H(+). It participates in sulfur metabolism; hydrogen sulfide biosynthesis; sulfite from sulfate: step 2/3. Catalyzes the synthesis of activated sulfate. The protein is Probable adenylyl-sulfate kinase of Pseudomonas aeruginosa.